The primary structure comprises 1997 residues: Receptor-type tyrosine-protein phosphatase beta (1997 aa).

The N-terminal stretch at 1-22 (MLSHGAGLALWITLSLLQTGLA) is a signal peptide. 17 consecutive Fibronectin type-III domains span residues 23-111 (EPER…TDPL), 112-207 (PPAR…SPVK), 203-288 (PSPV…VRTA), 291-378 (EVSN…TFPD), 379-471 (KVAN…LAVL), 467-552 (PLAV…KGRT), 556-641 (QVTD…EGRT), 642-729 (VPSS…QERT), 730-829 (VPDK…TLRN), 819-906 (PEPV…GFTV), 909-1001 (AVKN…VQGV), 995-1083 (PASV…EGRT), 1087-1175 (AVTD…VPAS), 1173-1260 (PASV…SRTA), 1260-1356 (APSP…TKPD), 1357-1448 (KIQN…IDRP), and 1458-1554 (NEKD…EMES). The Extracellular portion of the chain corresponds to 23–1621 (EPERCNFTLA…ESEPLFGAIE (1599 aa)). Asn28, Asn53, Asn75, Asn172, Asn198, Asn267, Asn321, Asn414, Asn421, Asn479, Asn544, Asn574, Asn598, Asn652, Asn721, and Asn829 each carry an N-linked (GlcNAc...) asparagine glycan. Residues Asn1040, Asn1096, Asn1163, Asn1185, Asn1212, Asn1274, Asn1367, Asn1470, Asn1474, and Asn1518 are each glycosylated (N-linked (GlcNAc...) asparagine). A helical membrane pass occupies residues 1622–1642 (GVSAGLFLIGMLVAVVALLIC). Topologically, residues 1643–1997 (RQKVSHGRER…YHRDPVYSRH (355 aa)) are cytoplasmic. The Tyrosine-protein phosphatase domain maps to 1703 to 1963 (LSKEYEELKD…VYLHQCVRDV (261 aa)). Residues Asp1870, 1904 to 1910 (CSAGVGR), and Gln1948 each bind substrate. The active-site Phosphocysteine intermediate is the Cys1904. A Phosphotyrosine modification is found at Tyr1981.

The protein belongs to the protein-tyrosine phosphatase family. Receptor class 3 subfamily. Monomer. Interacts with TEK. Interacts via fibronectin type-III 17 domain with CDH5. Detected in a complex with CNTN1 and NRCAM. Interacts (phosphorylated form) with FYN and GRB2. Interacts with IGFBP2.

The protein resides in the membrane. It carries out the reaction O-phospho-L-tyrosyl-[protein] + H2O = L-tyrosyl-[protein] + phosphate. In terms of biological role, plays an important role in blood vessel remodeling and angiogenesis. Not necessary for the initial formation of blood vessels, but is essential for their maintenance and remodeling. Can induce dephosphorylation of TEK/TIE2, CDH5/VE-cadherin and KDR/VEGFR-2. Regulates angiopoietin-TIE2 signaling in endothelial cells. Acts as a negative regulator of TIE2, and controls TIE2 driven endothelial cell proliferation, which in turn affects blood vessel remodeling during embryonic development and determines blood vessel size during perinatal growth. Essential for the maintenance of endothelial cell contact integrity and for the adhesive function of VE-cadherin in endothelial cells and this requires the presence of plakoglobin. The protein is Receptor-type tyrosine-protein phosphatase beta (PTPRB) of Homo sapiens (Human).